Consider the following 191-residue polypeptide: Protein GrpE (191 aa).

2 stretches are compositionally biased toward basic and acidic residues: residues 1–19 and 29–42; these read MKDEHNQEHDHLSQKEPES and QQGEEKQEASEKEC. The disordered stretch occupies residues 1-42; it reads MKDEHNQEHDHLSQKEPESYQKACACKEQQGEEKQEASEKEC.

Belongs to the GrpE family. In terms of assembly, homodimer.

Its subcellular location is the cytoplasm. Participates actively in the response to hyperosmotic and heat shock by preventing the aggregation of stress-denatured proteins, in association with DnaK and GrpE. It is the nucleotide exchange factor for DnaK and may function as a thermosensor. Unfolded proteins bind initially to DnaJ; upon interaction with the DnaJ-bound protein, DnaK hydrolyzes its bound ATP, resulting in the formation of a stable complex. GrpE releases ADP from DnaK; ATP binding to DnaK triggers the release of the substrate protein, thus completing the reaction cycle. Several rounds of ATP-dependent interactions between DnaJ, DnaK and GrpE are required for fully efficient folding. This is Protein GrpE from Helicobacter pylori (strain HPAG1).